The chain runs to 117 residues: Immunoglobulin kappa variable 1D-43 (117 aa).

Residues 1 to 22 form the signal peptide; it reads MDMRVPAQRLGLLLLWFPGARC. The framework-1 stretch occupies residues 23 to 45; sequence AIRMTQSPFSLSASVGDRVTITC. In terms of domain architecture, Ig-like spans 23–117; it reads AIRMTQSPFS…YYCQQYYSTP (95 aa). A disulfide bridge links C45 with C110. Residues 46–56 form a complementarity-determining-1 region; sequence WASQGISSYLA. Residues 57-71 are framework-2; the sequence is WYQQKPAKAPKLFIY. The segment at 72–78 is complementarity-determining-2; sequence YASSLQS. Positions 79–110 are framework-3; the sequence is GVPSRFSGSGSGTDYTLTISSLQPEDFATYYC. The interval 111–117 is complementarity-determining-3; it reads QQYYSTP.

In terms of assembly, immunoglobulins are composed of two identical heavy chains and two identical light chains; disulfide-linked.

The protein resides in the secreted. It is found in the cell membrane. Its function is as follows. V region of the variable domain of immunoglobulin light chains that participates in the antigen recognition. Immunoglobulins, also known as antibodies, are membrane-bound or secreted glycoproteins produced by B lymphocytes. In the recognition phase of humoral immunity, the membrane-bound immunoglobulins serve as receptors which, upon binding of a specific antigen, trigger the clonal expansion and differentiation of B lymphocytes into immunoglobulins-secreting plasma cells. Secreted immunoglobulins mediate the effector phase of humoral immunity, which results in the elimination of bound antigens. The antigen binding site is formed by the variable domain of one heavy chain, together with that of its associated light chain. Thus, each immunoglobulin has two antigen binding sites with remarkable affinity for a particular antigen. The variable domains are assembled by a process called V-(D)-J rearrangement and can then be subjected to somatic hypermutations which, after exposure to antigen and selection, allow affinity maturation for a particular antigen. The protein is Immunoglobulin kappa variable 1D-43 of Homo sapiens (Human).